We begin with the raw amino-acid sequence, 416 residues long: Isobutyryl-CoA dehydrogenase, mitochondrial (416 aa).

The N-terminal 21 residues, 1–21 (MISGLFKLSNKQSVLQNATKL), are a transit peptide targeting the mitochondrion. Residues 156 to 165 (YCLTEPGSGS) and 189 to 191 (FIS) each bind FAD. S165 contacts substrate. Position 273–276 (273–276 (NGGR)) interacts with substrate. Residues R301, 311-312 (FQ), and 370-374 (QLFGG) contribute to the FAD site. The active-site Proton acceptor is E397. 399-401 (SDA) is a binding site for FAD. Position 409 (R409) interacts with substrate.

The protein belongs to the acyl-CoA dehydrogenase family. In terms of assembly, homotetramer. FAD serves as cofactor.

The protein resides in the mitochondrion. It catalyses the reaction 2-methylpropanoyl-CoA + oxidized [electron-transfer flavoprotein] + H(+) = 2-methylpropenoyl-CoA + reduced [electron-transfer flavoprotein]. The catalysed reaction is (2S)-2-methylbutanoyl-CoA + oxidized [electron-transfer flavoprotein] + H(+) = (2E)-2-methylbut-2-enoyl-CoA + reduced [electron-transfer flavoprotein]. It carries out the reaction propanoyl-CoA + oxidized [electron-transfer flavoprotein] + H(+) = acryloyl-CoA + reduced [electron-transfer flavoprotein]. It participates in amino-acid degradation; L-valine degradation. Functionally, isobutyryl-CoA dehydrogenase which catalyzes one of the steps of the valine catabolic pathway. To a lesser extent, is also able to catalyze the oxidation of (2S)-2-methylbutanoyl-CoA. The polypeptide is Isobutyryl-CoA dehydrogenase, mitochondrial (acad8) (Dictyostelium discoideum (Social amoeba)).